A 101-amino-acid chain; its full sequence is Putative pterin-4-alpha-carbinolamine dehydratase (101 aa).

Belongs to the pterin-4-alpha-carbinolamine dehydratase family.

It catalyses the reaction (4aS,6R)-4a-hydroxy-L-erythro-5,6,7,8-tetrahydrobiopterin = (6R)-L-erythro-6,7-dihydrobiopterin + H2O. This is Putative pterin-4-alpha-carbinolamine dehydratase from Rhodopseudomonas palustris (strain HaA2).